The sequence spans 504 residues: SPbeta prophage-derived uncharacterized protein YorI (504 aa).

The polypeptide is SPbeta prophage-derived uncharacterized protein YorI (yorI) (Bacillus subtilis (strain 168)).